The primary structure comprises 535 residues: MNLKILVGLFILGIIILSAMTFLNFTTIVAQDKGDQQPKGPIVYTYTEYNGTYFPHILTVVYYPCNATCSNLGFPSVWPVSNENQCHNAVVNTTCQALIEGVDWQLPLLNYVGGVAIPLSTPPCKLPWAQQLGVKGALVYYTQMVGEPLGVTLACGLLYATEDSMPGSITAINPVTGKIVWMANGLAGPAMNNPVVWHGIVYVSVGGVCFTFSQFVHFEDHQYCKIHRGRCGAVYAFNATNGQLLWMRFTYGEAMPAPAIYDGILAYVTGGGCFVGVNATTGQTLWVDHFPGFIANMASVNYYVLPNGTPLFIAGFTYTAPPYGYIIAVNGLNGHEAWNATMPAPYVGANTGLGDVAPAVDQQLGIVVDNDIANFSNGYVDMVTFALNATNGKPLWAVNTGRGPIPPAYKGGMPLIVGNVVYDGNPSLGTVNAICIKTGKILWSTKLPCLQTPPKFPGGPRGSPTYYHGLLWVSAGQYVYVINPKNGDILTFYWIGGRLGIMNPVIAGNTMFLSNSYGWIVAIPLSQIYPAYIYY.

The first 39 residues, methionine 1 to lysine 39, serve as a signal peptide directing secretion. The N-linked (GlcNAc...) asparagine glycan is linked to asparagine 50.

The protein belongs to the tetrathionate hydrolase family. As to quaternary structure, monomer and homodimer; in equilibrium.

The protein resides in the cell surface. It catalyses the reaction tetrathionate + H2O = sulfur + thiosulfate + sulfate + H(+). Catalyzes the hydrolysis of tetrathionate to generate elemental sulfur, thiosulfate and sulfate. This chain is Tetrathionate hydrolase, found in Acidianus ambivalens (Desulfurolobus ambivalens).